The following is a 433-amino-acid chain: D-amino acid dehydrogenase (433 aa).

Position 3 to 17 (Val-3 to Trp-17) interacts with FAD.

The protein belongs to the DadA oxidoreductase family. It depends on FAD as a cofactor.

It carries out the reaction a D-alpha-amino acid + A + H2O = a 2-oxocarboxylate + AH2 + NH4(+). It participates in amino-acid degradation; D-alanine degradation; NH(3) and pyruvate from D-alanine: step 1/1. Its function is as follows. Oxidative deamination of D-amino acids. In Erwinia tasmaniensis (strain DSM 17950 / CFBP 7177 / CIP 109463 / NCPPB 4357 / Et1/99), this protein is D-amino acid dehydrogenase.